Reading from the N-terminus, the 285-residue chain is Meiotically up-regulated gene 74 protein (285 aa).

Its subcellular location is the cytoplasm. Its function is as follows. Has a role in meiosis. The polypeptide is Meiotically up-regulated gene 74 protein (mug74) (Schizosaccharomyces pombe (strain 972 / ATCC 24843) (Fission yeast)).